The following is a 57-amino-acid chain: Sec-independent protein translocase protein TatA (57 aa).

The helical transmembrane segment at M1–T21 threads the bilayer. Residues G37–S57 form a disordered region. The span at D44–S57 shows a compositional bias: polar residues.

It belongs to the TatA/E family. In terms of assembly, the Tat system comprises two distinct complexes: a TatABC complex, containing multiple copies of TatA, TatB and TatC subunits, and a separate TatA complex, containing only TatA subunits. Substrates initially bind to the TatABC complex, which probably triggers association of the separate TatA complex to form the active translocon.

The protein localises to the cell inner membrane. Part of the twin-arginine translocation (Tat) system that transports large folded proteins containing a characteristic twin-arginine motif in their signal peptide across membranes. TatA could form the protein-conducting channel of the Tat system. The chain is Sec-independent protein translocase protein TatA from Stutzerimonas stutzeri (Pseudomonas stutzeri).